The following is a 158-amino-acid chain: Snaclec jerdonuxin subunit alpha (158 aa).

A signal peptide spans 1 to 23 (MGRFTFVSFGLLVVFLSLSGTGA). 3 disulfide bridges follow: C27–C38, C55–C152, and C127–C144. The 120-residue stretch at 34 to 153 (YDRYCYQAFS…CGTENPFVCK (120 aa)) folds into the C-type lectin domain.

It belongs to the snaclec family. As to quaternary structure, tetramer of 4 heterodimers of alpha and beta subunits; disulfide-linked. In terms of tissue distribution, expressed by the venom gland.

It is found in the secreted. Snaclec that strongly induces platelet aggregation, in a dose-dependent manner. This is Snaclec jerdonuxin subunit alpha from Protobothrops jerdonii (Jerdon's pitviper).